Here is a 506-residue protein sequence, read N- to C-terminus: Maturase K (506 aa).

It belongs to the intron maturase 2 family. MatK subfamily.

It localises to the plastid. It is found in the chloroplast. Usually encoded in the trnK tRNA gene intron. Probably assists in splicing its own and other chloroplast group II introns. The sequence is that of Maturase K from Rhododendron tsusiophyllum (Rhododendron).